The following is a 286-amino-acid chain: tRNA uridine(34) hydroxylase (286 aa).

The Rhodanese domain maps to 130-225 (RGDDVVFFDG…YGETFGDRGL (96 aa)). The active-site Cysteine persulfide intermediate is the Cys-185.

The protein belongs to the TrhO family.

The catalysed reaction is uridine(34) in tRNA + AH2 + O2 = 5-hydroxyuridine(34) in tRNA + A + H2O. Functionally, catalyzes oxygen-dependent 5-hydroxyuridine (ho5U) modification at position 34 in tRNAs. In Rhodococcus erythropolis (strain PR4 / NBRC 100887), this protein is tRNA uridine(34) hydroxylase.